A 201-amino-acid polypeptide reads, in one-letter code: 3-isopropylmalate dehydratase small subunit (201 aa).

The protein belongs to the LeuD family. LeuD type 1 subfamily. Heterodimer of LeuC and LeuD.

The catalysed reaction is (2R,3S)-3-isopropylmalate = (2S)-2-isopropylmalate. Its pathway is amino-acid biosynthesis; L-leucine biosynthesis; L-leucine from 3-methyl-2-oxobutanoate: step 2/4. Functionally, catalyzes the isomerization between 2-isopropylmalate and 3-isopropylmalate, via the formation of 2-isopropylmaleate. The chain is 3-isopropylmalate dehydratase small subunit from Shewanella halifaxensis (strain HAW-EB4).